Here is a 952-residue protein sequence, read N- to C-terminus: Bifunctional ent-kaurene synthase (952 aa).

A DXDD B-type cyclization motif motif is present at residues 328-331 (DVDD). The Mg(2+) site is built by Asp668, Glu672, Asn848, Asp849, Ser852, and Asp856. The DEXXE A-type cyclization motif motif lies at 668–672 (DEYME).

This sequence belongs to the terpene synthase family. Mg(2+) serves as cofactor.

The enzyme catalyses ent-copalyl diphosphate = ent-kaur-16-ene + diphosphate. It catalyses the reaction (2E,6E,10E)-geranylgeranyl diphosphate = ent-copalyl diphosphate. It functions in the pathway plant hormone biosynthesis; gibberellin biosynthesis. Bifunctional ent-kaurene synthase; part of the gene cluster that mediates the biosynthesis of gibberellins (GAs), diterpenoids that may provide a selective advantage during infection of the preferred host plant, rice. Gibberellins (GAs) are diterpenoids and are synthesized via the mevalonate pathway. Biosynthesis of the major metabolite GA3 (gibberellic acid) from geranylgeranyl diphosphate (GGPP) requires 13 steps. The GGPP produced by the geranylgeranyl diphosphate synthase GGS2 is converted to ent-kaurene via ent-copalyldiphosphate in a two-step cyclization reaction performed by the bifunctional ent-copalyl diphosphate synthase/ent-kaurene synthase enzyme (CPS/KS). Ent-Kaurene is metabolized to GAs by a series of oxidation reactions catalyzed by cytochrome P450 monooxygenases. Cytochrome P450 monooxygenase P450-4 is an ent-kaurene oxidase that catalyzes the three oxidation steps between ent-kaurene and ent-kaurenoic acid. The highly multifunctional cytochrome P450 monooxygenase P450-1 then catalyzes four steps involving oxidation at two carbon atoms, in the main pathway from ent-kaurenoic acid to GA14 via GA12-aldehyde as well as producing kaurenolides and fujenoic acids as by-products. The cytochrome P450 monooxygenase P450-2 then converts GA14 to GA4 by removal of C-20. GA4 is further converted to GA7 by the GA4 desaturase DES via 1,2-desaturation before cytochrome P450 monooxygenase P450-3, a 13-hydroxylase, hydroxylates GA7 to GA3, the final product of the GA-biosynthetic pathway. The chain is Bifunctional ent-kaurene synthase from Gibberella fujikuroi (strain CBS 195.34 / IMI 58289 / NRRL A-6831) (Bakanae and foot rot disease fungus).